The sequence spans 811 residues: LPS-assembly protein LptD (811 aa).

An N-terminal signal peptide occupies residues 1-17 (MTEPNRARKTRQRTAFA). The tract at residues 1–22 (MTEPNRARKTRQRTAFAAPDQR) is disordered.

The protein belongs to the LptD family. Component of the lipopolysaccharide transport and assembly complex. Interacts with LptE and LptA.

It is found in the cell outer membrane. In terms of biological role, together with LptE, is involved in the assembly of lipopolysaccharide (LPS) at the surface of the outer membrane. In Ralstonia nicotianae (strain ATCC BAA-1114 / GMI1000) (Ralstonia solanacearum), this protein is LPS-assembly protein LptD.